A 184-amino-acid polypeptide reads, in one-letter code: GTP-binding protein Rheb (184 aa).

A Glycyl lysine isopeptide (Lys-Gly) (interchain with G-Cter in ubiquitin) cross-link involves residue Lys8. GDP is bound by residues Ser16, Val17, Gly18, Lys19, Ser20, Ser21, Val32, and Asp33. Residue Ser16 coordinates GTP. The GTP site is built by Gly18, Lys19, Ser20, Ser21, and Val32. Ser20 contributes to the Mg(2+) binding site. The GTP site is built by Tyr35, Thr38, Asn119, and Asp122. The Effector region motif lies at 35 to 43; the sequence is YDPTIENTF. Thr38 lines the Mg(2+) pocket. Residues Asn119 and Asp122 each contribute to the GDP site. Position 130 is a phosphoserine; by MAPKAPK5 (Ser130). Ala150 contacts GDP. A GTP-binding site is contributed by Ala150. Cys181 bears the Cysteine methyl ester mark. Cys181 carries S-farnesyl cysteine lipidation. Positions 182–184 are cleaved as a propeptide — removed in mature form; the sequence is SVM.

The protein belongs to the small GTPase superfamily. Rheb family. In terms of assembly, associates with the mTORC1 complex (MTOR, MLST8 and RPTOR) in a guanyl nucleotide-independent manner. Interacts with TSC2. Interacts with MCRS1; the interaction maintains RHEB at the lysosome in its active GTP-bound form and prevents its interaction with the mTORC1 complex inhibitor TSC2, ensuring activation of the mTORC1 complex by RHEB. Interacts (when prenylated) with PDE6D; this promotes release from membranes. Farnesylation is important for efficiently activating mTORC1-mediated signaling. Post-translationally, polyubiquitinated in response to amino acid, promoting its interaction with MTOR and mTORC1 activation. Deubiquitination by ATXN3 promotes recruitment of the TSC-TBC complex and RHEB inactivation by TSC2. Monoubiquitinated at Lys-8 by RNF152, promoting its association with the TSC-TBC complex. Deubiquitinated at Lys-8 by USP4, promoting mTORC1 activation. In terms of processing, phosphorylation by MAPKAPK5 impairs GTP-binding and inactivation. Ubiquitous. Highest levels observed in skeletal and cardiac muscle.

Its subcellular location is the endomembrane system. It is found in the lysosome membrane. The protein resides in the golgi apparatus membrane. It localises to the endoplasmic reticulum membrane. The protein localises to the cytoplasm. Its subcellular location is the cytosol. It carries out the reaction GTP + H2O = GDP + phosphate + H(+). Its activity is regulated as follows. Alternates between an inactive form bound to GDP and an active form bound to GTP. Inactivated by the TSC-TBC complex via the GTPase activating protein (GAP) domain of TSC2. Autoinhibited by Tyr-35, which constrains the active site conformation, restricting the access of the catalytic Asp-65 to the nucleotide-binding pocket. Specifically inhibited by NR1 (4-bromo-6-(3,4-dichlorophenylthio)-1-(4-(dimethylcarbamoyl)benzyl)-1H-indole-2-carboxylic acid). In terms of biological role, small GTPase that acts as an allosteric activator of the canonical mTORC1 complex, an evolutionarily conserved central nutrient sensor that stimulates anabolic reactions and macromolecule biosynthesis to promote cellular biomass generation and growth. In response to nutrients, growth factors or amino acids, specifically activates the protein kinase activity of MTOR, the catalytic component of the mTORC1 complex: acts by causing a conformational change that allows the alignment of residues in the active site of MTOR, thereby enhancing the phosphorylation of ribosomal protein S6 kinase (RPS6KB1 and RPS6KB2) and EIF4EBP1 (4E-BP1). RHEB is also required for localization of the TSC-TBC complex to lysosomal membranes. In response to starvation, RHEB is inactivated by the TSC-TBC complex, preventing activation of mTORC1. Has low intrinsic GTPase activity. In Homo sapiens (Human), this protein is GTP-binding protein Rheb.